The primary structure comprises 437 residues: Leucine-rich repeat flightless-interacting protein 2 (437 aa).

Serine 18 bears the Phosphoserine mark. Residues 22 to 49 adopt a coiled-coil conformation; the sequence is EALSNIAREAEARLAAKRAARAEARDIR. The segment covering 33–62 has biased composition (basic and acidic residues); sequence ARLAAKRAARAEARDIRMRELERQQRESSS. The interval 33-152 is disordered; the sequence is ARLAAKRAAR…DTSLSELRES (120 aa). Polar residues predominate over residues 63–74; sequence KDITGTHWSRAS. Positions 77 to 105 are enriched in basic and acidic residues; that stretch reads KRRDMMYDSIKDRSSRVSSLLDEKSDKQY. Over residues 110–139 the composition is skewed to polar residues; that stretch reads TRPSSRNSASATTPLSGNSSRRGSGDTSSL. Phosphoserine occurs at positions 114, 117, 125, 129, and 133. A Phosphothreonine modification is found at threonine 136. Residues serine 137 and serine 138 each carry the phosphoserine modification. 2 coiled-coil regions span residues 143–239 and 282–430; these read DTSL…LIEK and LDVR…KANR.

It belongs to the LRRFIP family. Interacts with DVL3 and FLII. Weakly interacts with MYD88 in resting cells. Following LPS-stimulation, the interaction with MYD88 is rapidly enhanced; the complex gradually dissociates to basal levels after 6 hours of stimulation. Interaction with MYD88 is regulated by LPS-induced phosphorylation. In the presence of LPS, competes with FLII for MYD88-binding.

Functionally, may function as activator of the canonical Wnt signaling pathway, in association with DVL3, upstream of CTNNB1/beta-catenin. Positively regulates Toll-like receptor (TLR) signaling in response to agonist probably by competing with the negative FLII regulator for MYD88-binding. The sequence is that of Leucine-rich repeat flightless-interacting protein 2 (Lrrfip2) from Rattus norvegicus (Rat).